The chain runs to 508 residues: ATP synthase subunit alpha, chloroplastic (508 aa).

Position 172–179 (172–179 (GDRQTGKT)) interacts with ATP.

It belongs to the ATPase alpha/beta chains family. In terms of assembly, F-type ATPases have 2 components, CF(1) - the catalytic core - and CF(0) - the membrane proton channel. CF(1) has five subunits: alpha(3), beta(3), gamma(1), delta(1), epsilon(1). CF(0) has four main subunits: a, b, b' and c.

Its subcellular location is the plastid. The protein resides in the chloroplast thylakoid membrane. It catalyses the reaction ATP + H2O + 4 H(+)(in) = ADP + phosphate + 5 H(+)(out). Functionally, produces ATP from ADP in the presence of a proton gradient across the membrane. The alpha chain is a regulatory subunit. In Psilotum nudum (Whisk fern), this protein is ATP synthase subunit alpha, chloroplastic.